The sequence spans 380 residues: DNA replication and repair protein RecF (380 aa).

Residue 30–37 participates in ATP binding; the sequence is GPNGFGKT.

The protein belongs to the RecF family.

The protein localises to the cytoplasm. The RecF protein is involved in DNA metabolism; it is required for DNA replication and normal SOS inducibility. RecF binds preferentially to single-stranded, linear DNA. It also seems to bind ATP. The sequence is that of DNA replication and repair protein RecF from Mycobacterium sp. (strain KMS).